We begin with the raw amino-acid sequence, 322 residues long: 3-hydroxyacyl-CoA dehydrogenase FVEG_12628 (322 aa).

A helical transmembrane segment spans residues 5–25; it reads IRTVAIVGCGVIGMGWAVLFL. The active-site For hydroxyacyl-coenzyme A dehydrogenase activity is Glu-151.

The protein belongs to the 3-hydroxyacyl-CoA dehydrogenase family.

It is found in the membrane. Its function is as follows. 3-hydroxyacyl-CoA dehydrogenase; part of the Fusarium detoxification of benzoxazolinone cluster 2 (FDB2) involved in the degradation of benzoxazolinones produced by the host plant. Maize, wheat, and rye produce the 2 benzoxazinone phytoanticipins 2,4-dihy-droxy-7-methoxy-1,4-benzoxazin-3-one (DIMBOA) and 2,4-dihydroxy-1,4-benzoxazin-3-one (DIBOA) that, due to their inherent instability once released, spontaneously degrade to the more stable corresponding benzoxazolinones, 6-methoxy-2-benzoxazolinone (MBOA) and 2-benzoxazolinone (BOA), respectively. The first step in the detoxification of benzoxazolinones involves the hydrolysis of the cyclic ester bond of benzoxazolinones by the FDB1 cluster gamma-lactamase MBL1 to aminophenols. MBL1 is able to convert BOA into 2-aminophenol (2-AP), as well as MBOA into 5-methoxy-2-aminophenol (2-AMP). The FDB2 cluster N-malonyltransferase FDB2/NAT1 then metabolizes aminophenols via N-malonylation to non-toxic malonamic acids. FDB2/NAT1 converts 2-AP into N-(2-hydroxyphenyl) malonamic acid (HPMA) and 2-AMP into N-(2-hydroxy-4-methoxyphenyl) malonamic acid (HMPMA). The duplicated dienlactone hydrolases DLH1 and DLH2 may provide redundant function for hydrolyzing the lactone moiety in the BOA molecule. The roles of the amidases an other enzymes encoded by the 2 FDB clusters have not been identified so far. The chain is 3-hydroxyacyl-CoA dehydrogenase FVEG_12628 from Gibberella moniliformis (strain M3125 / FGSC 7600) (Maize ear and stalk rot fungus).